The primary structure comprises 94 residues: Integration host factor subunit beta (94 aa).

Belongs to the bacterial histone-like protein family. As to quaternary structure, heterodimer of an alpha and a beta chain.

Functionally, this protein is one of the two subunits of integration host factor, a specific DNA-binding protein that functions in genetic recombination as well as in transcriptional and translational control. In Dechloromonas aromatica (strain RCB), this protein is Integration host factor subunit beta.